We begin with the raw amino-acid sequence, 425 residues long: Glutamyl-tRNA reductase (425 aa).

Residues threonine 49 to arginine 52, serine 107, glutamate 112 to glutamine 114, and glutamine 118 each bind substrate. The Nucleophile role is filled by cysteine 50. Glycine 187–isoleucine 192 provides a ligand contact to NADP(+).

This sequence belongs to the glutamyl-tRNA reductase family. As to quaternary structure, homodimer.

The catalysed reaction is (S)-4-amino-5-oxopentanoate + tRNA(Glu) + NADP(+) = L-glutamyl-tRNA(Glu) + NADPH + H(+). The protein operates within porphyrin-containing compound metabolism; protoporphyrin-IX biosynthesis; 5-aminolevulinate from L-glutamyl-tRNA(Glu): step 1/2. Catalyzes the NADPH-dependent reduction of glutamyl-tRNA(Glu) to glutamate 1-semialdehyde (GSA). This Pseudomonas putida (strain ATCC 47054 / DSM 6125 / CFBP 8728 / NCIMB 11950 / KT2440) protein is Glutamyl-tRNA reductase.